Reading from the N-terminus, the 448-residue chain is Trigger factor (448 aa).

The 86-residue stretch at 172–257 (GDRVTVDFVG…MKKIEWPHMP (86 aa)) folds into the PPIase FKBP-type domain.

It belongs to the FKBP-type PPIase family. Tig subfamily.

The protein localises to the cytoplasm. The enzyme catalyses [protein]-peptidylproline (omega=180) = [protein]-peptidylproline (omega=0). Its function is as follows. Involved in protein export. Acts as a chaperone by maintaining the newly synthesized protein in an open conformation. Functions as a peptidyl-prolyl cis-trans isomerase. In Burkholderia vietnamiensis (strain G4 / LMG 22486) (Burkholderia cepacia (strain R1808)), this protein is Trigger factor.